A 140-amino-acid polypeptide reads, in one-letter code: Nucleoside diphosphate kinase (140 aa).

Residues Lys11, Phe59, Arg87, Thr93, Arg104, and Asn114 each contribute to the ATP site. Catalysis depends on His117, which acts as the Pros-phosphohistidine intermediate.

Belongs to the NDK family. As to quaternary structure, homotetramer. The cofactor is Mg(2+).

It localises to the cytoplasm. The catalysed reaction is a 2'-deoxyribonucleoside 5'-diphosphate + ATP = a 2'-deoxyribonucleoside 5'-triphosphate + ADP. It carries out the reaction a ribonucleoside 5'-diphosphate + ATP = a ribonucleoside 5'-triphosphate + ADP. Functionally, major role in the synthesis of nucleoside triphosphates other than ATP. The ATP gamma phosphate is transferred to the NDP beta phosphate via a ping-pong mechanism, using a phosphorylated active-site intermediate. This Bradyrhizobium diazoefficiens (strain JCM 10833 / BCRC 13528 / IAM 13628 / NBRC 14792 / USDA 110) protein is Nucleoside diphosphate kinase.